The primary structure comprises 949 residues: Autophagy-related protein 9 (949 aa).

Residues 1 to 197 are disordered; the sequence is MMTSNILSRF…GVKWSLGQPN (197 aa). Over 1 to 232 the chain is Cytoplasmic; it reads MMTSNILSRF…EVYSYFLGNG (232 aa). Basic and acidic residues-rich tracts occupy residues 35–57, 75–85, and 129–139; these read VEER…HELQ, FLARESHHRVP, and EGHHDDEDLKS. Residues 233 to 253 traverse the membrane as a helical segment; the sequence is IWSILLTRVLSLLTFAFVVGF. Residues 254–289 are Lumenal-facing; sequence STFLTNCVNYHKVRGSKTLDDILVDRCTTKMSLSST. A helical transmembrane segment spans residues 290 to 310; it reads FLLWLLTFFWIGKAFQCLLGI. Topologically, residues 311-431 are cytoplasmic; that stretch reads RRLKHMHDFY…NLCIMDYVFN (121 aa). Residues 432-477 lie within the membrane without spanning it; sequence EQGQVRTLFLKDTHRKALSEGLRRRFIFAGFMNIFVAPFIVVYFMM. Residues 478-542 lie on the Cytoplasmic side of the membrane; that stretch reads HYFFRYFNEY…DQFPKDKTVQ (65 aa). A helical transmembrane segment spans residues 543 to 563; it reads VAGFVAFVSGALASVLALASV. Residues 564 to 578 are Lumenal-facing; sequence VDPELFLGFEITHDR. The helical transmembrane segment at 579–599 threads the bilayer; the sequence is TVLFYLGVFGSVWAVARGMVP. At 600 to 645 the chain is on the cytoplasmic side; that stretch reads EETNVFDPEYALLEVINYTHYFPSQWKGRLHSDEVRREFAELYQMK. The stretch at 646 to 666 is an intramembrane region; it reads IVIFLEEILSMIFTPFILWFS. Topologically, residues 667-949 are cytoplasmic; it reads LPRCSDRLID…DGRGRTAVGL (283 aa). The tract at residues 748 to 919 is disordered; that stretch reads GAHPSTKRQF…DAGAGGENAD (172 aa).

The protein belongs to the ATG9 family. Homotrimer; forms a homotrimer with a central pore that forms a path between the two membrane leaflets. Phosphorylated by atg1. Atg1 phosphorylation is required for preautophagosome elongation.

It is found in the preautophagosomal structure membrane. The protein resides in the cytoplasmic vesicle membrane. It localises to the golgi apparatus membrane. The protein localises to the endoplasmic reticulum membrane. The enzyme catalyses a 1,2-diacyl-sn-glycero-3-phosphocholine(in) = a 1,2-diacyl-sn-glycero-3-phosphocholine(out). It carries out the reaction a 1,2-diacyl-sn-glycero-3-phospho-L-serine(in) = a 1,2-diacyl-sn-glycero-3-phospho-L-serine(out). The catalysed reaction is a 1,2-diacyl-sn-glycero-3-phosphoethanolamine(in) = a 1,2-diacyl-sn-glycero-3-phosphoethanolamine(out). It catalyses the reaction a 1,2-diacyl-sn-glycero-3-phospho-(1D-myo-inositol-3-phosphate)(in) = a 1,2-diacyl-sn-glycero-3-phospho-(1D-myo-inositol-3-phosphate)(out). In terms of biological role, phospholipid scramblase involved in autophagy and cytoplasm to vacuole transport (Cvt) vesicle formation. Cycles between the preautophagosomal structure/phagophore assembly site (PAS) and the cytoplasmic vesicle pool and supplies membrane for the growing autophagosome. Lipid scramblase activity plays a key role in preautophagosomal structure/phagophore assembly by distributing the phospholipids that arrive through atg2 from the cytoplasmic to the luminal leaflet of the bilayer, thereby driving autophagosomal membrane expansion. Required for mitophagy. Also involved in endoplasmic reticulum-specific autophagic process and is essential for the survival of cells subjected to severe ER stress. Different machineries are required for anterograde trafficking to the PAS during either the Cvt pathway or bulk autophagy and for retrograde trafficking. The polypeptide is Autophagy-related protein 9 (atg9) (Aspergillus clavatus (strain ATCC 1007 / CBS 513.65 / DSM 816 / NCTC 3887 / NRRL 1 / QM 1276 / 107)).